We begin with the raw amino-acid sequence, 379 residues long: Protein trichome birefringence-like 36 (379 aa).

The chain crosses the membrane as a helical; Signal-anchor for type II membrane protein span at residues 8 to 24; that stretch reads VLFLSLCLILGKVVLSQ. The GDS motif signature appears at 123-125; that stretch reads GDS. Positions 353–367 match the DCXHWCLPGXXDXWN motif motif; the sequence is DCSHWCLPGVPDIWN.

It belongs to the PC-esterase family. TBL subfamily.

Its subcellular location is the membrane. May act as a bridging protein that binds pectin and other cell wall polysaccharides. Probably involved in maintaining esterification of pectins. May be involved in the specific O-acetylation of cell wall polymers. This chain is Protein trichome birefringence-like 36 (TBL36), found in Arabidopsis thaliana (Mouse-ear cress).